A 634-amino-acid polypeptide reads, in one-letter code: Chaperone protein DnaK (634 aa).

Thr199 carries the post-translational modification Phosphothreonine; by autocatalysis. Low complexity predominate over residues 601–618; the sequence is AAAGQAQAESGAGAQGNA. Residues 601–634 form a disordered region; the sequence is AAAGQAQAESGAGAQGNAKPDDVVDAEFEEVDKK. Residues 623-634 are compositionally biased toward acidic residues; the sequence is VVDAEFEEVDKK.

The protein belongs to the heat shock protein 70 family.

In terms of biological role, acts as a chaperone. The sequence is that of Chaperone protein DnaK from Acidithiobacillus ferrooxidans (strain ATCC 23270 / DSM 14882 / CIP 104768 / NCIMB 8455) (Ferrobacillus ferrooxidans (strain ATCC 23270)).